The chain runs to 493 residues: MTELNKLTVADSIKGLKNKDFTSTELIGAHIKQIEKHRNLNAYVTDTFDLALKQAEAADQNYAQNNARTLEGIPFAAKDLFCTKGIRTTACSNILKNFIPNYESSVTQNIFDKGGVMLGKTNMDEFAMGSANITSCFGNVISPWKANDDNADLVPGGSSGGSAAAVSGFMASAALGSDTGGSVRQPASFTGLVGFKPTYGRCSRYGMISFASSLDQAGIFTRSVLDSSIMLEAMMGFDEKDSTSIKAEVPELQSAIGSSMKNMKIGVPLSLGEGSIIEPDIMKMWQDTIELLKNAGAEIVDITLPHAKYGVAVYYVIAPAEASSNLSRYDGVRYGLRVERENMTLDEMYEMTRSTGFGEEVKRRIMIGTYVLSSSGMDAYYLKAQKVRRLVANDFNNAFAKVDAILLPTAPTAAFKIGEKQNDPTIMYLNDLFTIPASLAGLPCASVPAGLSARGLPLGIQIIGKQLDEYNVLKVASTIESGVKHIKFEPKVF.

Residues K78 and S158 each act as charge relay system in the active site. S182 (acyl-ester intermediate) is an active-site residue.

It belongs to the amidase family. GatA subfamily. Heterotrimer of A, B and C subunits.

The enzyme catalyses L-glutamyl-tRNA(Gln) + L-glutamine + ATP + H2O = L-glutaminyl-tRNA(Gln) + L-glutamate + ADP + phosphate + H(+). Functionally, allows the formation of correctly charged Gln-tRNA(Gln) through the transamidation of misacylated Glu-tRNA(Gln) in organisms which lack glutaminyl-tRNA synthetase. The reaction takes place in the presence of glutamine and ATP through an activated gamma-phospho-Glu-tRNA(Gln). The polypeptide is Glutamyl-tRNA(Gln) amidotransferase subunit A (Rickettsia africae (strain ESF-5)).